The following is a 502-amino-acid chain: MCGGRGGIWLALAAALLHVSLQGEFQRRLYKELVKNYNPLERPVANDSQPLTVYFSLSLLQIMDVDEKNQVLTTNIWLQMSWTDHYLQWNMSEYPGVKNVRFPDGQIWKPDILLYNSADERFDATFHTNVLVNASGHCQYLPPGIFKSSCYIDVRWFPFDVQQCKLKFGSWSYGGWSLDLQMQEADISSYIPNGEWDLMGIPGKRNEKFYECCKEPYPDVTYTVTMRRRTLYYGLNLLIPCVLISALALLVFLLPADSGEKISLGITVLLSLTVFMLLVAEIMPATSDSVPLIAQYFASTMIIVGLSVVVTVIVLRYHHHDPDGGKMPKWTRIILLNWCAWFLRMKRPGEDKVRPACQHKPRRCSLASVELSAGAGPPTSNGNLLYIGFRGLEGMHCAPTPDSGVVCGRLACSPTHDEHLMHGAHPSDGDPDLAKILEEVRYIANRFRCQDESEVICSEWKFAACVVDRLCLMAFSVFTIICTIGILMSAPNFVEAVSKDFA.

An N-terminal signal peptide occupies residues 1 to 22 (MCGGRGGIWLALAAALLHVSLQ). At 23–233 (GEFQRRLYKE…VTMRRRTLYY (211 aa)) the chain is on the extracellular side. Residues arginine 42 and valine 44 each contribute to the Ca(2+) site. N-linked (GlcNAc...) asparagine glycosylation is found at asparagine 46, asparagine 90, and asparagine 133. Cysteine 150 and cysteine 164 form a disulfide bridge. Serine 172 and tyrosine 210 together coordinate Ca(2+). A disulfide bridge links cysteine 212 with cysteine 213. 3 helical membrane passes run 234 to 254 (GLNL…VFLL), 262 to 282 (ISLG…VAEI), and 295 to 315 (QYFA…VIVL). An essential for TMEM35A/NACHO-mediated proper subunit assembly and trafficking to cell membrane region spans residues 260–267 (EKISLGIT). Over 316 to 469 (RYHHHDPDGG…WKFAACVVDR (154 aa)) the chain is Cytoplasmic. Residues 470–490 (LCLMAFSVFTIICTIGILMSA) form a helical membrane-spanning segment.

The protein belongs to the ligand-gated ion channel (TC 1.A.9) family. Acetylcholine receptor (TC 1.A.9.1) subfamily. Alpha-7/CHRNA7 sub-subfamily. As to quaternary structure, homopentamer. Can also form heteropentamers with CHRNB2, mainly found in basal forebrain cholinergic neurons. Interacts with RIC3; which is required for proper folding and assembly. Interacts with LYPD6. Interacts with CANX. Post-translationally, glycosylations at Asn-46, Asn-90 and Asn-133 are essential for TMEM35A/NACHO-mediated proper subunit assembly and trafficking to the cell membrane. As to expression, expressed in neurons. Expressed in umbrella cells of urothelium (at protein level).

It localises to the postsynaptic cell membrane. The protein resides in the cell membrane. The enzyme catalyses Ca(2+)(in) = Ca(2+)(out). It catalyses the reaction K(+)(in) = K(+)(out). The catalysed reaction is Na(+)(in) = Na(+)(out). It carries out the reaction choline(out) = choline(in). The enzyme catalyses NH4(+)(in) = NH4(+)(out). It catalyses the reaction L-arginine(in) = L-arginine(out). The catalysed reaction is guanidine(out) = guanidine(in). Activated by a myriad of ligands such as acetylcholine, cytisine, nicotine, choline and epibatidine. Oligomeric amyloid-beta protein 42 activates specifially CHRNA7:CHRNB2 nAchRs. Activity is modulated by positive allosteric modulators (PAMs), such as flavonoids, with a wide range of chemical diversity, pharmacological sensitivity and efficacy. AChR activity is inhibited by the antagonists alpha-conotoxons RgIA, ImI and ImII, small disulfide-constrained peptides from cone snails. Alpha-conotoxin PnIC selectively inhibits CHRNA7:CHRNB2 over CHRNA7 homopentamer. Component of neuronal acetylcholine receptors (nAChRs) that function as pentameric, ligand-gated cation channels with high calcium permeability among other activities. nAChRs are excitatory neurotrasnmitter receptors formed by a collection of nAChR subunits known to mediate synaptic transmission in the nervous system and the neuromuscular junction. Each nAchR subunit confers differential attributes to channel properties, including activation, deactivation and desensitization kinetics, pH sensitivity, cation permeability, and binding to allosteric modulators. CHRNA7 forms homopentameric neuronal acetylcholine receptors abundantly expressed in the central nervous system, characterized by fast desensitization and high calcium permeability. Also forms heteropentamers with CHRNB2, mainly expressed in basal forebrain cholinergic neurons. Involved in the modulation of calcium-dependent signaling pathways and influences the release of neurotransmitters, including dopamine, glutamate and GABA. Also expressed in non-neuronal cells such as immune cells like lymphocytes, monocytes and macrophages. In T cells, activation induces metabotropic signaling that results in an increase of intracellular Ca2+ concentrations, independent of ionotropic receptor functions. In macrophages, required for acetylcholine-mediated inhibition of TNF and other inflammatory cytokine release. Once activated by acetylcholine, nicotine or other agonists, selectively inhibits production of pro-inflammatory cytokines while leaving anti-inflammatory cytokines undisturbed. Stimulates the cholinergic anti-inflammatory pathway, controlling inflammation by inhibiting NFKB nuclear translocation and activating the JAK2-STAT3 pathway, independently of ion channel activity. Also expressed in the urothelium where it modulates reflex bladder activity by increasing intracellular calcium through internal stores and decreasing basal ATP release. The chain is Neuronal acetylcholine receptor subunit alpha-7 (Chrna7) from Rattus norvegicus (Rat).